We begin with the raw amino-acid sequence, 170 residues long: Protein SprT (170 aa).

A SprT-like domain is found at 25 to 165 (SEQFFDRTFA…QYCKGRLEPV (141 aa)). His78 is a Zn(2+) binding site. Glu79 is an active-site residue. His82 is a binding site for Zn(2+).

It belongs to the SprT family. The cofactor is Zn(2+).

The protein resides in the cytoplasm. This chain is Protein SprT, found in Actinobacillus succinogenes (strain ATCC 55618 / DSM 22257 / CCUG 43843 / 130Z).